The following is a 715-amino-acid chain: DNA ligase (715 aa).

Residues 47–51, 96–97, and Glu-128 contribute to the NAD(+) site; these read DADYD and SL. The active-site N6-AMP-lysine intermediate is Lys-130. Residues Arg-151, Glu-188, Lys-306, and Lys-330 each coordinate NAD(+). The Zn(2+) site is built by Cys-435, Cys-438, Cys-453, and Cys-459. Residues 637-715 form the BRCT domain; sequence RRDTAVAGKT…EDEWLALIGN (79 aa).

It belongs to the NAD-dependent DNA ligase family. LigA subfamily. The cofactor is Mg(2+). Mn(2+) is required as a cofactor.

It carries out the reaction NAD(+) + (deoxyribonucleotide)n-3'-hydroxyl + 5'-phospho-(deoxyribonucleotide)m = (deoxyribonucleotide)n+m + AMP + beta-nicotinamide D-nucleotide.. Functionally, DNA ligase that catalyzes the formation of phosphodiester linkages between 5'-phosphoryl and 3'-hydroxyl groups in double-stranded DNA using NAD as a coenzyme and as the energy source for the reaction. It is essential for DNA replication and repair of damaged DNA. The sequence is that of DNA ligase from Rhodopseudomonas palustris (strain ATCC BAA-98 / CGA009).